Reading from the N-terminus, the 233-residue chain is UPF0758 protein Rcas_0037 (233 aa).

Residues 107–229 (QIRSPTDAAQ…FVSMRERGLA (123 aa)) form the MPN domain. Zn(2+)-binding residues include His-178, His-180, and Asp-191. A JAMM motif motif is present at residues 178–191 (HNHPSGDPTPSPED).

The protein belongs to the UPF0758 family.

In Roseiflexus castenholzii (strain DSM 13941 / HLO8), this protein is UPF0758 protein Rcas_0037.